The following is a 545-amino-acid chain: CTP synthase (545 aa).

Residues 1 to 266 (MTTRYIFVTG…DDLVTKRFGL (266 aa)) form an amidoligase domain region. CTP is bound at residue S14. S14 is a binding site for UTP. Residues 15 to 20 (SLGKGI) and D72 contribute to the ATP site. Residues D72 and E140 each contribute to the Mg(2+) site. Residues 147–149 (DIE), 187–192 (KTKPTQ), and K223 contribute to the CTP site. UTP-binding positions include 187–192 (KTKPTQ) and K223. 239–241 (KDV) contacts ATP. Residues 291–542 (TIGMVGKYTE…VAAAVAYQKR (252 aa)) form the Glutamine amidotransferase type-1 domain. L-glutamine is bound at residue G352. C379 functions as the Nucleophile; for glutamine hydrolysis in the catalytic mechanism. L-glutamine is bound by residues 380-383 (LGMQ), E403, and R470. Catalysis depends on residues H515 and E517.

This sequence belongs to the CTP synthase family. As to quaternary structure, homotetramer.

The catalysed reaction is UTP + L-glutamine + ATP + H2O = CTP + L-glutamate + ADP + phosphate + 2 H(+). It catalyses the reaction L-glutamine + H2O = L-glutamate + NH4(+). The enzyme catalyses UTP + NH4(+) + ATP = CTP + ADP + phosphate + 2 H(+). It participates in pyrimidine metabolism; CTP biosynthesis via de novo pathway; CTP from UDP: step 2/2. With respect to regulation, allosterically activated by GTP, when glutamine is the substrate; GTP has no effect on the reaction when ammonia is the substrate. The allosteric effector GTP functions by stabilizing the protein conformation that binds the tetrahedral intermediate(s) formed during glutamine hydrolysis. Inhibited by the product CTP, via allosteric rather than competitive inhibition. Its function is as follows. Catalyzes the ATP-dependent amination of UTP to CTP with either L-glutamine or ammonia as the source of nitrogen. Regulates intracellular CTP levels through interactions with the four ribonucleotide triphosphates. This is CTP synthase from Shewanella loihica (strain ATCC BAA-1088 / PV-4).